Reading from the N-terminus, the 366-residue chain is Cyanide hydratase (366 aa).

One can recognise a CN hydrolase domain in the interval 6-285 (YKAAAVTSEP…DGLMFVDIDL (280 aa)). The active-site Proton acceptor is the glutamate 46. Residue lysine 128 is part of the active site. Cysteine 163 serves as the catalytic Nucleophile.

The protein belongs to the carbon-nitrogen hydrolase superfamily. Nitrilase family. Oligomer of dimers, forming left-handed helical fibers.

The enzyme catalyses formamide = hydrogen cyanide + H2O. Functionally, catalyzes the hydration of cyanide to formamide. Degradation of cyanide may be important for plant pathogenic fungi in infection of cyanogenic plants. Can also transform some nitriles like 2-cyanopyridine and fumaronitrile. The polypeptide is Cyanide hydratase (Pyrenophora teres f. teres (strain 0-1) (Barley net blotch fungus)).